The primary structure comprises 470 residues: Ribosomal protein uS12 methylthiotransferase RimO (470 aa).

In terms of domain architecture, MTTase N-terminal spans 4 to 120 (TRVYLHTLGC…IARVVSDAQA (117 aa)). C13, C49, C83, C155, C159, and C162 together coordinate [4Fe-4S] cluster. Positions 141 to 371 (SLPSHTAYLK…MALQQEISRE (231 aa)) constitute a Radical SAM core domain. Residues 374–442 (RAMVGRRLEV…EYDLVGHVVA (69 aa)) enclose the TRAM domain. Positions 447–470 (RARRPLPAPAGGETPRRGGLPVVG) are disordered.

The protein belongs to the methylthiotransferase family. RimO subfamily. Requires [4Fe-4S] cluster as cofactor.

Its subcellular location is the cytoplasm. It carries out the reaction L-aspartate(89)-[ribosomal protein uS12]-hydrogen + (sulfur carrier)-SH + AH2 + 2 S-adenosyl-L-methionine = 3-methylsulfanyl-L-aspartate(89)-[ribosomal protein uS12]-hydrogen + (sulfur carrier)-H + 5'-deoxyadenosine + L-methionine + A + S-adenosyl-L-homocysteine + 2 H(+). Catalyzes the methylthiolation of an aspartic acid residue of ribosomal protein uS12. The chain is Ribosomal protein uS12 methylthiotransferase RimO from Anaeromyxobacter sp. (strain Fw109-5).